A 392-amino-acid polypeptide reads, in one-letter code: Probable tRNA sulfurtransferase (392 aa).

The THUMP domain occupies 60-162 (QQVINDLQQV…HDCAIVYGHK (103 aa)). ATP-binding positions include 180-181 (LL), 205-206 (TF), Arg264, Gly286, and Gln295.

The protein belongs to the ThiI family.

The protein resides in the cytoplasm. The enzyme catalyses [ThiI sulfur-carrier protein]-S-sulfanyl-L-cysteine + a uridine in tRNA + 2 reduced [2Fe-2S]-[ferredoxin] + ATP + H(+) = [ThiI sulfur-carrier protein]-L-cysteine + a 4-thiouridine in tRNA + 2 oxidized [2Fe-2S]-[ferredoxin] + AMP + diphosphate. It catalyses the reaction [ThiS sulfur-carrier protein]-C-terminal Gly-Gly-AMP + S-sulfanyl-L-cysteinyl-[cysteine desulfurase] + AH2 = [ThiS sulfur-carrier protein]-C-terminal-Gly-aminoethanethioate + L-cysteinyl-[cysteine desulfurase] + A + AMP + 2 H(+). The protein operates within cofactor biosynthesis; thiamine diphosphate biosynthesis. Catalyzes the ATP-dependent transfer of a sulfur to tRNA to produce 4-thiouridine in position 8 of tRNAs, which functions as a near-UV photosensor. Also catalyzes the transfer of sulfur to the sulfur carrier protein ThiS, forming ThiS-thiocarboxylate. This is a step in the synthesis of thiazole, in the thiamine biosynthesis pathway. The sulfur is donated as persulfide by IscS. In Ureaplasma urealyticum serovar 10 (strain ATCC 33699 / Western), this protein is Probable tRNA sulfurtransferase.